A 181-amino-acid chain; its full sequence is MIEYLTNKFLNSKQTLLEKIVQIHDKKINITKLAKTLIEKSDCTKIDNTIGQKLLIKATYANDLDLVKALHDKGVKLGTKDLLGRTSLHHAIKAGAGKDLIEFLIDNAGIDINACDKSGSTLMHWAVNSHHIPAIKLLQTKKADYFTPDYLGQTPLKLAEYYGHDDVIELLAENSSAGYYV.

ANK repeat units lie at residues isoleucine 50–threonine 79, leucine 83–alanine 114, serine 118–threonine 147, and leucine 151–tyrosine 180.

In Rickettsia bellii (strain RML369-C), this protein is Putative ankyrin repeat protein RBE_0150.